A 328-amino-acid polypeptide reads, in one-letter code: WUSCHEL-related homeobox 6 (328 aa).

Residues 1–11 are compositionally biased toward polar residues; it reads MEGSSNSPDRQ. A disordered region spans residues 1-45; the sequence is MEGSSNSPDRQSSGGSPPEERGGGGSGGGGGRSAAGEPVRSRWTP. Positions 23-33 are enriched in gly residues; that stretch reads GGGSGGGGGRS. The segment at residues 38–102 is a DNA-binding region (homeobox; WUS-type); sequence PVRSRWTPKP…NRRSRSRRRQ (65 aa).

This sequence belongs to the WUS homeobox family.

The protein resides in the nucleus. Its function is as follows. Transcription factor which may be involved in developmental processes. The polypeptide is WUSCHEL-related homeobox 6 (WOX6) (Oryza sativa subsp. japonica (Rice)).